The primary structure comprises 1263 residues: Condensin complex subunit dpy-26 (1263 aa).

The span at 1–10 (MDVPSSSNVT) shows a compositional bias: polar residues. The tract at residues 1–29 (MDVPSSSNVTGRRKRQVLDDDEDDGFRST) is disordered. The stretch at 691 to 725 (NEQMDETEVEERNEQDVQRELEDIALAADEVAELM) forms a coiled coil. Disordered regions lie at residues 1098-1118 (YQAA…GTAN) and 1225-1263 (FSNL…EMEE). Positions 1106–1118 (NNQPTTSTYGTAN) are enriched in polar residues. Basic residues predominate over residues 1230–1241 (RRPKAVPVRKGR).

Component of the condensin I complex, which contains the mix-1/SMC2 and smc-4/SMC4 heterodimer, and three non SMC subunits that probably regulate the complex: dpy-26, capg-1 and dpy-28. Within the complex, interacts with dpy-28, mix-1, smc-4 and capg-1. Component of the dosage compensation complex, which consists of the condensin I-like components mix-1/SMC2 and dpy-27/SMC4, and the three non SMC subunits dpy-26, capg-1 and dpy-28. Within the complex, interacts with dpy-27, dpy-28, mix-1 and capg-1. The interaction with dpy-27 is required for dpy-27 protein stability. Interacts with smcl-1. In terms of tissue distribution, expressed in embryos and in somatic and germline tissues in L4 stage larvae (at protein level).

It is found in the nucleus. It localises to the chromosome. Its function is as follows. Required for both chromosome condensation and segregation and for X-chromosome dosage compensation depending on its binding partners. Member of the condensin I complex, a complex required for conversion of interphase chromatin into mitotic-like condense chromosomes and for proper chromosome segregation in mitosis and meiosis. As a member of the condensin I complex, further controls the crossover number and distribution in meiosis by restricting double strand break formation, probably by influencing higher-order chromosome structure. Plays a role in robust cytokinesis upon presence of chromatin obstructions. Also a member of the condensin I-like dosage compensation complex that associates specifically with hermaphrodite X chromosomes to reduce their gene transcription during interphase, possibly through chromatin reorganization. As a member of the dosage compensation complex, also binds to regulatory regions of the autosomal her-1 gene, required for male development, possibly contributing to its repression in hermaphrodites. The protein is Condensin complex subunit dpy-26 of Caenorhabditis elegans.